A 378-amino-acid chain; its full sequence is MKILVDENMPYARDLFSRLGEVTAVPGRPIPVAQLADADALMVRSVTKVNESLLAGKPIKFVGTATAGTDHVDEAWLKQAGIGFSAAPGCNAIAVVEYVFSSLLMLAERDGFSLHDRTVGIVGVGNVGRRLQARLEALGIKTLLCDPPRADRGDEGDFRSLDELVQHADILTFHTPLFKDGPYKTLHLADEKLIRSLKPGAILINACRGAVVDNTALLTCLNEGQKLSVVLDVWEGEPELNVELLKKVDIGTPHIAGYTLEGKARGTTQVFEAYSKFIGHEQHVALDTLLPATEFGRITLHGPLDQPTLKRLVHLVYDVRRDDAPLRKVAGIPGEFDKLRKNYLERREWSSLYVICDDASAASLLCKLGFNAVHHPAR.

Substrate-binding residues include serine 45 and threonine 66. 2 residues coordinate NAD(+): aspartate 146 and threonine 175. The active site involves arginine 208. Position 232 (aspartate 232) interacts with NAD(+). Glutamate 237 is an active-site residue. Histidine 254 acts as the Proton donor in catalysis. An NAD(+)-binding site is contributed by glycine 257. Tyrosine 258 contributes to the substrate binding site.

Belongs to the D-isomer specific 2-hydroxyacid dehydrogenase family. PdxB subfamily. As to quaternary structure, homodimer.

It localises to the cytoplasm. The catalysed reaction is 4-phospho-D-erythronate + NAD(+) = (R)-3-hydroxy-2-oxo-4-phosphooxybutanoate + NADH + H(+). It functions in the pathway cofactor biosynthesis; pyridoxine 5'-phosphate biosynthesis; pyridoxine 5'-phosphate from D-erythrose 4-phosphate: step 2/5. Catalyzes the oxidation of erythronate-4-phosphate to 3-hydroxy-2-oxo-4-phosphonooxybutanoate. The protein is Erythronate-4-phosphate dehydrogenase of Escherichia coli O127:H6 (strain E2348/69 / EPEC).